The following is a 249-amino-acid chain: Zinc finger protein CG30 (249 aa).

An RING-type zinc finger spans residues 8 to 66; sequence CHICCSVGEIKNYFLQPVDAITILPIVELHTCRHQLCVMCVRKIAQRGRDKRVECPMCR.

In Orgyia pseudotsugata (Douglas-fir tussock moth), this protein is Zinc finger protein CG30 (CG30).